The primary structure comprises 101 residues: uncharacterized protein (101 aa).

The next 2 membrane-spanning stretches (helical) occupy residues 10 to 30 (VLAILVCQFIGPNVFIIIGSI) and 67 to 87 (IILGFIGIYVFLFVLLFILSI).

The protein resides in the membrane. This is an uncharacterized protein from Acanthamoeba polyphaga (Amoeba).